Reading from the N-terminus, the 317-residue chain is tRNA pseudouridine synthase B (317 aa).

Aspartate 47 (nucleophile) is an active-site residue.

This sequence belongs to the pseudouridine synthase TruB family. Type 1 subfamily.

The catalysed reaction is uridine(55) in tRNA = pseudouridine(55) in tRNA. Responsible for synthesis of pseudouridine from uracil-55 in the psi GC loop of transfer RNAs. This Shewanella frigidimarina (strain NCIMB 400) protein is tRNA pseudouridine synthase B.